Reading from the N-terminus, the 293-residue chain is Nucleotide-binding protein BCQ_4976 (293 aa).

An ATP-binding site is contributed by 14 to 21 (GMSGAGKT). 65-68 (DLRG) provides a ligand contact to GTP.

The protein belongs to the RapZ-like family.

Functionally, displays ATPase and GTPase activities. The polypeptide is Nucleotide-binding protein BCQ_4976 (Bacillus cereus (strain Q1)).